An 864-amino-acid chain; its full sequence is MTQDLSKHTPMMAQYLQLKAQNPDILLFYRMGDFYELFYDDAKKAAALLDISLTKRGASAGEPIPMAGVPYHAVEGYLAKLVSLGESVAICEQIGDPATSKGPVERKVVRIVTPGTVSDEALLPERQDNLVAAIYEEKGVFAIATLDMTSGRFLITELPNKEALAAELQRLQLAEILYAEDFSAAEILNNYKGLRRRPVWEFELVTAINLLNRQFGTQSLAGFGVEKAVVALCAAGCVLHYAQETQRTALPHINSIHLAQNSDTVLLDAATRRNLELTQNLAGGTENTLAAVLDKCVTPMGSRLLKRWIHQPIRDLEKLKKRQDIIDTLQKEQRIEPLQPLLQNVGDMERILARVALRSARPRDLTRLRTALAQLPDIAKNAKNLTASLDALVAQIGDFSELHALLERAIIETPPQLIRDGGVIAEGYNAELDEWRELSAGATQYLENLEIREREATGIDTLKIGFNAVHGYYIQISQGQAHKAPMHYVRRQTLKNAERYIIPELKTYEDKVLKAKGASLALEKQLYDELFDLLMPRLGEMQLAAMALSELDVLTNLAERAESLNYVRPTFSLQRGVNIKGGRHPVVEQVLKDPFIANPVFLNAQRHLLVVTGPNMGGKSTYMRQIALISLMAYIGSFVPADSAEIGALDRIFTRIGASDDLASGRSTFMVEMTEMANILHQATENSLVLIDEIGRGTSTYDGLSLAWACAEWLAKKTQSLTLFATHYFELTSLPSQLKGVANVHLDAREHQDSIVFMHSVQEGAASKSYGLAVAALAGVPKQVIQLAKQRLAHLEEISLQTKEAHDNPQGDLLFAADLQETPQIQPLVAQQSELEKALMSIDPDELTPRQALEALYRLKKLMA.

613–620 (GPNMGGKS) is a binding site for ATP.

Belongs to the DNA mismatch repair MutS family.

In terms of biological role, this protein is involved in the repair of mismatches in DNA. It is possible that it carries out the mismatch recognition step. This protein has a weak ATPase activity. The sequence is that of DNA mismatch repair protein MutS from Actinobacillus pleuropneumoniae serotype 3 (strain JL03).